Reading from the N-terminus, the 167-residue chain is 6,7-dimethyl-8-ribityllumazine synthase (167 aa).

5-amino-6-(D-ribitylamino)uracil is bound by residues F26, A60–E62, and A89–I91. Residue E94–T95 participates in (2S)-2-hydroxy-3-oxobutyl phosphate binding. H97 acts as the Proton donor in catalysis. Residue F122 participates in 5-amino-6-(D-ribitylamino)uracil binding. R136 contacts (2S)-2-hydroxy-3-oxobutyl phosphate.

The protein belongs to the DMRL synthase family. Forms an icosahedral capsid composed of 60 subunits, arranged as a dodecamer of pentamers.

It catalyses the reaction (2S)-2-hydroxy-3-oxobutyl phosphate + 5-amino-6-(D-ribitylamino)uracil = 6,7-dimethyl-8-(1-D-ribityl)lumazine + phosphate + 2 H2O + H(+). Its pathway is cofactor biosynthesis; riboflavin biosynthesis; riboflavin from 2-hydroxy-3-oxobutyl phosphate and 5-amino-6-(D-ribitylamino)uracil: step 1/2. Functionally, catalyzes the formation of 6,7-dimethyl-8-ribityllumazine by condensation of 5-amino-6-(D-ribitylamino)uracil with 3,4-dihydroxy-2-butanone 4-phosphate. This is the penultimate step in the biosynthesis of riboflavin. The chain is 6,7-dimethyl-8-ribityllumazine synthase from Vesicomyosocius okutanii subsp. Calyptogena okutanii (strain HA).